Consider the following 248-residue polypeptide: Probable transcriptional regulatory protein Noc_0137 (248 aa).

Belongs to the TACO1 family.

Its subcellular location is the cytoplasm. In Nitrosococcus oceani (strain ATCC 19707 / BCRC 17464 / JCM 30415 / NCIMB 11848 / C-107), this protein is Probable transcriptional regulatory protein Noc_0137.